The chain runs to 375 residues: Aminomethyltransferase (375 aa).

It belongs to the GcvT family. In terms of assembly, the glycine cleavage system is composed of four proteins: P, T, L and H.

The enzyme catalyses N(6)-[(R)-S(8)-aminomethyldihydrolipoyl]-L-lysyl-[protein] + (6S)-5,6,7,8-tetrahydrofolate = N(6)-[(R)-dihydrolipoyl]-L-lysyl-[protein] + (6R)-5,10-methylene-5,6,7,8-tetrahydrofolate + NH4(+). Its function is as follows. The glycine cleavage system catalyzes the degradation of glycine. In Cupriavidus necator (strain ATCC 17699 / DSM 428 / KCTC 22496 / NCIMB 10442 / H16 / Stanier 337) (Ralstonia eutropha), this protein is Aminomethyltransferase.